A 256-amino-acid chain; its full sequence is Putative F-box protein At3g51171 (256 aa).

Residues 1–44 form the F-box domain; it reads MVPLPWELEEDILSRLAAQSLVRFRSVCKRWNYLFDEKSFIKNH.

This is Putative F-box protein At3g51171 from Arabidopsis thaliana (Mouse-ear cress).